A 290-amino-acid chain; its full sequence is Ribonuclease 3 (290 aa).

In terms of domain architecture, RNase III spans 20 to 145 (YSCFYRILGF…FIGAIYLDRG (126 aa)). Mg(2+) is bound at residue E62. Residue D66 is part of the active site. Mg(2+)-binding residues include N131 and E134. E134 is an active-site residue. Positions 173-242 (NFKSKLIEWS…AQMTLKKIKG (70 aa)) constitute a DRBM domain. Residues 254–290 (KTQNNVPAEDTTPESETSLTAENQQIDEIISTEEISV) are disordered. The segment covering 267-279 (ESETSLTAENQQI) has biased composition (polar residues).

It belongs to the ribonuclease III family. As to quaternary structure, homodimer. Requires Mg(2+) as cofactor.

The protein resides in the cytoplasm. It catalyses the reaction Endonucleolytic cleavage to 5'-phosphomonoester.. In terms of biological role, digests double-stranded RNA. Involved in the processing of primary rRNA transcript to yield the immediate precursors to the large and small rRNAs (23S and 16S). Processes some mRNAs, and tRNAs when they are encoded in the rRNA operon. Processes pre-crRNA and tracrRNA of type II CRISPR loci if present in the organism. In Bacteroides fragilis (strain ATCC 25285 / DSM 2151 / CCUG 4856 / JCM 11019 / LMG 10263 / NCTC 9343 / Onslow / VPI 2553 / EN-2), this protein is Ribonuclease 3.